A 209-amino-acid chain; its full sequence is Ribosomal RNA large subunit methyltransferase E (209 aa).

Residues Gly-63, Trp-65, Asp-83, Asp-99, and Asp-124 each coordinate S-adenosyl-L-methionine. Lys-164 acts as the Proton acceptor in catalysis.

This sequence belongs to the class I-like SAM-binding methyltransferase superfamily. RNA methyltransferase RlmE family.

The protein localises to the cytoplasm. It carries out the reaction uridine(2552) in 23S rRNA + S-adenosyl-L-methionine = 2'-O-methyluridine(2552) in 23S rRNA + S-adenosyl-L-homocysteine + H(+). Its function is as follows. Specifically methylates the uridine in position 2552 of 23S rRNA at the 2'-O position of the ribose in the fully assembled 50S ribosomal subunit. The protein is Ribosomal RNA large subunit methyltransferase E of Vibrio atlanticus (strain LGP32) (Vibrio splendidus (strain Mel32)).